Here is a 261-residue protein sequence, read N- to C-terminus: Acidic leucine-rich nuclear phosphoprotein 32 family member A (261 aa).

LRR repeat units follow at residues 16-37, 39-60, 61-83, and 84-105; these read QITE…TDEY, ALES…PKLP, NLKK…TTSP, and KLQY…KPLE. In terms of domain architecture, LRRCT spans 118–156; sequence NDATQVDNYREKIFKMLPSLNFLDGFDCNDEEVQSDGDD. Acidic residues-rich tracts occupy residues 145–185 and 194–229; these read CNDE…EEAN and YNDD…DGDA. The segment at 145 to 261 is disordered; sequence CNDEEVQSDG…VRGKKRKHDG (117 aa). The segment covering 238 to 252 has biased composition (basic and acidic residues); it reads AKDKDGEKEADESQV.

Belongs to the ANP32 family. In terms of processing, phosphorylated on serine residues.

The protein localises to the nucleus. Its subcellular location is the cytoplasm. Its function is as follows. Implicated in a number of cellular processes, including proliferation, differentiation, caspase-dependent and caspase-independent apoptosis, suppression of transformation (tumor suppressor), inhibition of protein phosphatase 2A, regulation of mRNA trafficking and stability, and inhibition of acetyltransferases as part of the INHAT (inhibitor of histone acetyltransferases) complex. In Drosophila melanogaster (Fruit fly), this protein is Acidic leucine-rich nuclear phosphoprotein 32 family member A (Anp32a).